We begin with the raw amino-acid sequence, 148 residues long: Large ribosomal subunit protein bL9 (148 aa).

The protein belongs to the bacterial ribosomal protein bL9 family.

Functionally, binds to the 23S rRNA. The protein is Large ribosomal subunit protein bL9 of Acidithiobacillus ferrooxidans (strain ATCC 23270 / DSM 14882 / CIP 104768 / NCIMB 8455) (Ferrobacillus ferrooxidans (strain ATCC 23270)).